We begin with the raw amino-acid sequence, 314 residues long: Olfactory receptor 5P66 (314 aa).

Residues 1-28 lie on the Extracellular side of the membrane; it reads MAFLENGNHTAVSEFILLGLTDDPVLRI. Residue Asn-8 is glycosylated (N-linked (GlcNAc...) asparagine). The helical transmembrane segment at 29-49 threads the bilayer; the sequence is VLFTIILCIYLVTVSGNLSTI. The Cytoplasmic segment spans residues 50–57; that stretch reads LLIRVSSQ. A helical transmembrane segment spans residues 58-78; it reads LHHPMYFFLSHLASADIGLSS. Residues 79–102 lie on the Extracellular side of the membrane; it reads SVTPNMLVNFLVERSTISYLGCGI. Cys-100 and Cys-192 form a disulfide bridge. Residues 103-123 form a helical membrane-spanning segment; it reads QLSSAALFGATECFLLAAMAY. Residues 124–136 lie on the Cytoplasmic side of the membrane; sequence DRFMAICNPLLYS. Residues 137–157 form a helical membrane-spanning segment; it reads TKMSTKVCVQLIVGSYIAGFL. The Extracellular portion of the chain corresponds to 158–199; it reads NASSFLLSFFSLLFCGQNIINDFFCDFAPLAELSCSDVSVFV. Residues 200 to 220 form a helical membrane-spanning segment; sequence VVISFSAGTVTMLTVFVIAIS. The Cytoplasmic portion of the chain corresponds to 221–240; that stretch reads YSYILITILKMRSTEGRQKA. Residues 241–261 traverse the membrane as a helical segment; the sequence is FSTCTSHLTAVTLFYGTVTFI. Over 262–274 the chain is Extracellular; that stretch reads YVMPKSSYSMDQN. Residues 275–295 form a helical membrane-spanning segment; the sequence is KIISVFYMVVVPMLNPLIYSL. Over 296–314 the chain is Cytoplasmic; it reads RNNEIKGALKRHFDRKTFS.

This sequence belongs to the G-protein coupled receptor 1 family.

It localises to the cell membrane. Potential odorant receptor. The protein is Olfactory receptor 5P66 of Mus musculus (Mouse).